The primary structure comprises 137 residues: Large ribosomal subunit protein uL16 (137 aa).

The disordered stretch occupies residues 1 to 20; that stretch reads MLQPSNRKYRKDFKGRNRGV. Positions 7–17 are enriched in basic residues; it reads RKYRKDFKGRN.

Belongs to the universal ribosomal protein uL16 family. As to quaternary structure, part of the 50S ribosomal subunit.

Binds 23S rRNA and is also seen to make contacts with the A and possibly P site tRNAs. This Coxiella burnetii (strain CbuK_Q154) (Coxiella burnetii (strain Q154)) protein is Large ribosomal subunit protein uL16.